The sequence spans 23 residues: Unknown protein NF005 from 2D-PAGE (23 aa).

The tract at residues 1 to 23 (AGKARKQLSKNEDTKLKEQYIXD) is disordered. Residues 9–23 (SKNEDTKLKEQYIXD) show a composition bias toward basic and acidic residues.

The polypeptide is Unknown protein NF005 from 2D-PAGE (Naegleria fowleri (Brain eating amoeba)).